Here is a 127-residue protein sequence, read N- to C-terminus: Small ribosomal subunit protein uS11 (127 aa).

Belongs to the universal ribosomal protein uS11 family. In terms of assembly, part of the 30S ribosomal subunit. Interacts with proteins S7 and S18. Binds to IF-3.

In terms of biological role, located on the platform of the 30S subunit, it bridges several disparate RNA helices of the 16S rRNA. Forms part of the Shine-Dalgarno cleft in the 70S ribosome. The chain is Small ribosomal subunit protein uS11 from Anaeromyxobacter dehalogenans (strain 2CP-C).